The following is a 141-amino-acid chain: Large ribosomal subunit protein uL11 (141 aa).

This sequence belongs to the universal ribosomal protein uL11 family. Part of the ribosomal stalk of the 50S ribosomal subunit. Interacts with L10 and the large rRNA to form the base of the stalk. L10 forms an elongated spine to which L12 dimers bind in a sequential fashion forming a multimeric L10(L12)X complex. In terms of processing, one or more lysine residues are methylated.

In terms of biological role, forms part of the ribosomal stalk which helps the ribosome interact with GTP-bound translation factors. This Bacillus cereus (strain ATCC 10987 / NRS 248) protein is Large ribosomal subunit protein uL11.